Consider the following 388-residue polypeptide: LL-diaminopimelate aminotransferase (388 aa).

Residues Y16 and G41 each contribute to the substrate site. Residues Y70, 104–105 (SK), Y129, N179, Y210, and 239–241 (SLS) each bind pyridoxal 5'-phosphate. Substrate is bound by residues K105, Y129, and N179. At K242 the chain carries N6-(pyridoxal phosphate)lysine. Residue R250 participates in pyridoxal 5'-phosphate binding. R368 contacts substrate.

The protein belongs to the class-I pyridoxal-phosphate-dependent aminotransferase family. LL-diaminopimelate aminotransferase subfamily. Homodimer. Pyridoxal 5'-phosphate is required as a cofactor.

The enzyme catalyses (2S,6S)-2,6-diaminopimelate + 2-oxoglutarate = (S)-2,3,4,5-tetrahydrodipicolinate + L-glutamate + H2O + H(+). The protein operates within amino-acid biosynthesis; L-lysine biosynthesis via DAP pathway; LL-2,6-diaminopimelate from (S)-tetrahydrodipicolinate (aminotransferase route): step 1/1. Its function is as follows. Involved in the synthesis of meso-diaminopimelate (m-DAP or DL-DAP), required for both lysine and peptidoglycan biosynthesis. Catalyzes the direct conversion of tetrahydrodipicolinate to LL-diaminopimelate. The protein is LL-diaminopimelate aminotransferase of Nitratidesulfovibrio vulgaris (strain ATCC 29579 / DSM 644 / CCUG 34227 / NCIMB 8303 / VKM B-1760 / Hildenborough) (Desulfovibrio vulgaris).